The following is a 280-amino-acid chain: Energy-coupling factor transporter ATP-binding protein EcfA1 (280 aa).

The ABC transporter domain maps to 6–241 (LRTENISFQY…SHMLQEIGLD (236 aa)). 40-47 (GQNGSGKS) serves as a coordination point for ATP.

The protein belongs to the ABC transporter superfamily. Energy-coupling factor EcfA family. Forms a stable energy-coupling factor (ECF) transporter complex composed of 2 membrane-embedded substrate-binding proteins (S component), 2 ATP-binding proteins (A component) and 2 transmembrane proteins (T component).

Its subcellular location is the cell membrane. Functionally, ATP-binding (A) component of a common energy-coupling factor (ECF) ABC-transporter complex. Unlike classic ABC transporters this ECF transporter provides the energy necessary to transport a number of different substrates. This is Energy-coupling factor transporter ATP-binding protein EcfA1 from Bacillus cereus (strain ATCC 10987 / NRS 248).